We begin with the raw amino-acid sequence, 532 residues long: Beta-hexosaminidase subunit A1 (532 aa).

The N-terminal stretch at 1 to 18 is a signal peptide; that stretch reads MIKKIILFFAVLIAIVIG. N-linked (GlcNAc...) asparagine glycosylation is found at Asn-72 and Asn-79. Catalysis depends on Glu-308, which acts as the Proton donor. N-linked (GlcNAc...) asparagine glycosylation is found at Asn-350 and Asn-427.

It belongs to the glycosyl hydrolase 20 family. In terms of assembly, dimer. The N-terminus is blocked. In terms of processing, N-glycosylated.

It localises to the lysosome. The enzyme catalyses Hydrolysis of terminal non-reducing N-acetyl-D-hexosamine residues in N-acetyl-beta-D-hexosaminides.. Responsible for the degradation of GM2 gangliosides, and a variety of other molecules containing terminal N-acetyl hexosamines. This enzyme plays a role during the slug stage of development in the maintenance of pseudoplasmodia of normal size. This chain is Beta-hexosaminidase subunit A1 (hexa1), found in Dictyostelium discoideum (Social amoeba).